Consider the following 1692-residue polypeptide: Regulating synaptic membrane exocytosis protein 1 (1692 aa).

The interval 1–26 (MSSAVGPRGPRPPTVPPPMQELPDLS) is disordered. Residues 9-20 (GPRPPTVPPPMQ) are compositionally biased toward pro residues. In terms of domain architecture, RabBD spans 22-182 (LPDLSHLTEE…TKSGAWFFGS (161 aa)). Residues 110-170 (KDDAPTCGIC…VCNLCRKQQE (61 aa)) form an FYVE-type zinc finger. C116, C119, C132, C135, C140, C143, C162, and C165 together coordinate Zn(2+). Positions 183–199 (GPQQTSQDGTLSDTATG) are enriched in polar residues. Residues 183–555 (GPQQTSQDGT…CEDVELESES (373 aa)) are disordered. Basic and acidic residues predominate over residues 204 to 217 (VPREKKARLQERSR). A compositionally biased stretch (low complexity) spans 223-234 (STAAASSQDAAP). Over residues 305 to 357 (VEERERKERRESRRLEKGRSQDYPDTPEKRDEGKAADEEKQRKEEDYQTRYRS) the composition is skewed to basic and acidic residues. Positions 377–388 (MHARVSRARHER) are enriched in basic residues. Low complexity predominate over residues 412-430 (RAPAAARASPPDSPRAYSA). A compositionally biased stretch (basic and acidic residues) spans 462 to 475 (PELKAQEPLRKQSR). Positions 497–509 (RNDSLSSDQSESV) are enriched in polar residues. S500 is modified (phosphoserine). The span at 515-527 (KPHRSKRGGKKRQ) shows a compositional bias: basic residues. The span at 545–555 (SCEDVELESES) shows a compositional bias: acidic residues. A Phosphoserine modification is found at S578. A PDZ domain is found at 605–691 (RTTMPKDSGA…EPQVEIIVSR (87 aa)). A disordered region spans residues 698–732 (RIPESSHPPLESSSSSFESQKMERPSISVISPTSP). Over residues 700 to 716 (PESSHPPLESSSSSFES) the composition is skewed to low complexity. A phosphoserine mark is found at S728 and S731. Residues 742-865 (LPGQLSVKLW…ALLDDEPHWY (124 aa)) enclose the C2 1 domain. The tract at residues 870 to 1013 (HDESSLPLPQ…RTRDVDSQYL (144 aa)) is disordered. Position 881 is a phosphoserine (S881). A compositionally biased stretch (polar residues) spans 935–944 (STTLTVPEQQ). At S977 the chain carries Phosphoserine. Basic and acidic residues predominate over residues 992 to 1009 (RHHDASRSPVDHRTRDVD). S1031 bears the Phosphoserine mark. 2 disordered regions span residues 1118–1222 (NCLR…EHSS) and 1235–1278 (GGSA…PVRS). Composition is skewed to basic and acidic residues over residues 1128 to 1144 (SPERERGRWSPSLDRRR) and 1157 to 1170 (PENDRHSRKSERSS). S1252 carries the phosphoserine modification. The span at 1252–1265 (SPTQSPPADTSFSS) shows a compositional bias: polar residues. T1254 is subject to Phosphothreonine. A phosphoserine mark is found at S1256, S1308, S1310, S1311, S1339, S1340, and S1342. 3 disordered regions span residues 1332 to 1394 (CDNV…SGRS), 1408 to 1428 (LEHNDGSQSDTAVGTVGAGGK), and 1445 to 1495 (RSRS…GSIN). Residues 1345-1366 (SDVSAISRTSSASRLSSTSFMS) show a composition bias toward low complexity. S1416 bears the Phosphoserine mark. A compositionally biased stretch (basic and acidic residues) spans 1477-1490 (EMRKMVRQPSREST). A C2 2 domain is found at 1538-1656 (AMGDIQIGME…DLSSMVIGWY (119 aa)). S1677, S1680, S1683, and S1692 each carry phosphoserine.

As to quaternary structure, binds RAB3A, RAB3B and RAB3D that have been activated by GTP-binding. Interacts with RAB3C, RAB10, RAB26 and RAB37. Binds UNC13A. Interacts with TSPOAP1 and RIMBP2. Interacts with PPFIA3 and PPFIA4. Interacts with ERC1. Binds SNAP25, SYT1 and CACNA1B. Interaction with SYT1 is enhanced by calcium ions. Interaction with SNAP25 is weaker in the presence of calcium ions. Phosphorylated by BRSK1. As to expression, expressed in melanocytes. Detected in brain and retina.

The protein resides in the cell membrane. It is found in the synapse. It localises to the presynaptic cell membrane. Rab effector involved in exocytosis. May act as scaffold protein that regulates neurotransmitter release at the active zone. Essential for maintaining normal probability of neurotransmitter release and for regulating release during short-term synaptic plasticity. Plays a role in dendrite formation by melanocytes. The chain is Regulating synaptic membrane exocytosis protein 1 (RIMS1) from Homo sapiens (Human).